The sequence spans 339 residues: MRSIFWDDGLKLIDQTKLPEKLEVIECRNVEELADAIKKLAVRGAPALEAAGAYGIALAAREREFADVDELKEHLKKAADFLASTRPTAVNLFVGIERALNAALKGESVEEVKELALREAEKLAEEDVERNRKMGEYGAELLEDGDVVLTYCNAGRLATVDWGTALGVVRSAVEQGKEIRVIACETRPLNQGSRLTCWELMEDGIDVTLITDSMVGIVMQKGMVDKVIVGADRIVRDAVFNKIGTYTVSVVAKHHNIPFYVAAPKATFDWERTAKDVVIEERPREELIFCGKRQIAPLNVKVYNPAFDPTPLENVTALITEYGVIYPPYEVNVPKVLKF.

Residues 43–45 (RGA), arginine 86, and glutamine 191 each bind substrate. Aspartate 232 acts as the Proton donor in catalysis. 241 to 242 (NK) contributes to the substrate binding site.

It belongs to the eIF-2B alpha/beta/delta subunits family. MtnA subfamily.

The enzyme catalyses 5-(methylsulfanyl)-alpha-D-ribose 1-phosphate = 5-(methylsulfanyl)-D-ribulose 1-phosphate. In terms of biological role, catalyzes the interconversion of methylthioribose-1-phosphate (MTR-1-P) into methylthioribulose-1-phosphate (MTRu-1-P). The protein is Putative methylthioribose-1-phosphate isomerase of Archaeoglobus fulgidus (strain ATCC 49558 / DSM 4304 / JCM 9628 / NBRC 100126 / VC-16).